The sequence spans 435 residues: Maltodextrin transport system permease protein MalC (435 aa).

10 helical membrane-spanning segments follow: residues 34–54 (GFIFLGVTIVFVLYFLALATP), 73–93 (FMLIRGAFHLIFVIVYVLFYF), 130–150 (YLLIIPSYVAMTFAIIFPVIV), 199–219 (IIWALAASTLQIVIGIFTAII), 230–250 (IFGVIFLLPWAVPAFITILTF), 263–283 (TQVLPILAKFLPFLDGALIPW), 294–314 (LIMMQGWLGFPYIYVLTLGIL), 338–358 (NITFPMILAVAAPTLISQYTF), 371–391 (GGGPGSVGGGAGSTDILISWI), and 404–424 (MAAAVTLIISIIVISISMIAF). Residues 195–423 (LSWTIIWALA…IIVISISMIA (229 aa)) enclose the ABC transmembrane type-1 domain.

It belongs to the binding-protein-dependent transport system permease family. MalFG subfamily.

The protein localises to the cell membrane. Part of the binding-protein-dependent transport system for maltodextrin; probably responsible for the translocation of the substrate across the membrane. The protein is Maltodextrin transport system permease protein MalC (malC) of Streptococcus pneumoniae serotype 4 (strain ATCC BAA-334 / TIGR4).